We begin with the raw amino-acid sequence, 323 residues long: Phosphate acetyltransferase (323 aa).

This sequence belongs to the phosphate acetyltransferase and butyryltransferase family.

The protein localises to the cytoplasm. The enzyme catalyses acetyl-CoA + phosphate = acetyl phosphate + CoA. It functions in the pathway metabolic intermediate biosynthesis; acetyl-CoA biosynthesis; acetyl-CoA from acetate: step 2/2. This is Phosphate acetyltransferase (pta) from Bacillus subtilis (strain 168).